A 1946-amino-acid polypeptide reads, in one-letter code: 1,3-beta-glucan synthase component (1946 aa).

Disordered stretches follow at residues 1–127 and 152–198; these read MSGY…FSDF and YGEG…KEPY. Low complexity-rich tracts occupy residues 24–34, 43–60, and 91–109; these read GYYQDDQYYDQ, GDHA…QGDG, and DDYY…NQGY. Residues 165–180 are compositionally biased toward polar residues; that stretch reads QLSYGGNRSSGASTPN. N-linked (GlcNAc...) asparagine glycosylation is found at asparagine 171 and asparagine 290. A disordered region spans residues 297-316; sequence KRKAKKGKKKGGEAGNEAET. 6 helical membrane passes run 489 to 509, 537 to 557, 576 to 596, 618 to 638, 675 to 695, and 734 to 754; these read WFHL…MFWF, FSIV…ATLA, LLFL…VFMF, IGIV…VMPL, FGLW…YLTL, and IVLI…TYLF. Asparagine 1017 and asparagine 1312 each carry an N-linked (GlcNAc...) asparagine glycan. 5 consecutive transmembrane segments (helical) span residues 1356 to 1376, 1413 to 1433, 1500 to 1520, 1523 to 1543, and 1615 to 1635; these read NMFI…IGAL, CIIS…VQEL, FAGQ…FATS, WQPA…SPFL, and IFLT…VAYL. Residue asparagine 1649 is glycosylated (N-linked (GlcNAc...) asparagine). The next 5 membrane-spanning stretches (helical) occupy residues 1667 to 1687, 1703 to 1723, 1738 to 1758, 1803 to 1823, and 1864 to 1884; these read LAVV…AMFG, FGPV…IIFF, LAGI…IVSL, FSAD…LILI, and AILY…PGVI. An N-linked (GlcNAc...) asparagine glycan is attached at asparagine 1918. Residues 1920–1946 are disordered; it reads TEGKTETGTKAGGADASATDASKLRLF. The span at 1925-1940 shows a compositional bias: low complexity; the sequence is ETGTKAGGADASATDA.

This sequence belongs to the glycosyltransferase 48 family. In terms of assembly, component of the 1,3-beta-glucan synthase (GS) complex composed of a catalytic subunit GLS1 and a regulatory subunit RHO1.

Its subcellular location is the membrane. It localises to the cell membrane. The catalysed reaction is [(1-&gt;3)-beta-D-glucosyl](n) + UDP-alpha-D-glucose = [(1-&gt;3)-beta-D-glucosyl](n+1) + UDP + H(+). With respect to regulation, activated by iron ions. Inhibited by manganese, copper and zinc ions. In terms of biological role, catalytic subunit of the 1,3-beta-glucan synthase (GS). Synthesizes 1,3-beta-glucan, a major structural component of the fungal cell wall. Involved in cell wall synthesis, maintenance and remodeling. This Cordyceps militaris (strain CM01) (Caterpillar fungus) protein is 1,3-beta-glucan synthase component.